A 1155-amino-acid polypeptide reads, in one-letter code: DNA-directed RNA polymerase subunit beta (1155 aa).

Belongs to the RNA polymerase beta chain family. In terms of assembly, the RNAP catalytic core consists of 2 alpha, 1 beta, 1 beta' and 1 omega subunit. When a sigma factor is associated with the core the holoenzyme is formed, which can initiate transcription.

It catalyses the reaction RNA(n) + a ribonucleoside 5'-triphosphate = RNA(n+1) + diphosphate. Functionally, DNA-dependent RNA polymerase catalyzes the transcription of DNA into RNA using the four ribonucleoside triphosphates as substrates. The protein is DNA-directed RNA polymerase subunit beta of Borreliella afzelii (strain PKo) (Borrelia afzelii).